The primary structure comprises 439 residues: Trigger factor (439 aa).

The region spanning 165–250 (GDFAKFDFEG…LHEIQELKLP (86 aa)) is the PPIase FKBP-type domain.

Belongs to the FKBP-type PPIase family. Tig subfamily.

The protein localises to the cytoplasm. The enzyme catalyses [protein]-peptidylproline (omega=180) = [protein]-peptidylproline (omega=0). Involved in protein export. Acts as a chaperone by maintaining the newly synthesized protein in an open conformation. Functions as a peptidyl-prolyl cis-trans isomerase. The protein is Trigger factor of Campylobacter lari (strain RM2100 / D67 / ATCC BAA-1060).